We begin with the raw amino-acid sequence, 292 residues long: Keratin-associated protein 10-9 (292 aa).

25 repeat units span residues 26 to 30 (CCEPP), 31 to 35 (CCATS), 36 to 40 (CCAPA), 57 to 61 (CCQVT), 79 to 83 (CCQQS), 99 to 103 (CCVPV), 104 to 108 (CCKPV), 109 to 113 (CCVPV), 114 to 118 (CCGAS), 120 to 124 (CCQQS), 130 to 134 (CCASS), 140 to 144 (CCVPV), 145 to 149 (CCKPV), 150 to 154 (CCAPT), 162 to 166 (CCQQS), 172 to 176 (CCTSS), 182 to 186 (YCVPV), 187 to 191 (CCKPV), 192 to 196 (CCKPI), 197 to 201 (CCVPV), 209 to 213 (CCQQS), 219 to 223 (CCTTS), 224 to 228 (CCRPS), 243 to 247 (CCVPV), and 250 to 254 (CCAPT). The interval 26–254 (CCEPPCCATS…VPVSSCCAPT (229 aa)) is 25 X 5 AA repeats of C-C-X(3).

The protein belongs to the KRTAP type 10 family. Interacts with hair keratins. As to expression, restricted to a narrow region of the hair fiber cuticle, lying approximately 20 cell layers above the apex of the dermal papilla of the hair root; not detected in any other tissues.

In the hair cortex, hair keratin intermediate filaments are embedded in an interfilamentous matrix, consisting of hair keratin-associated proteins (KRTAP), which are essential for the formation of a rigid and resistant hair shaft through their extensive disulfide bond cross-linking with abundant cysteine residues of hair keratins. The matrix proteins include the high-sulfur and high-glycine-tyrosine keratins. This Homo sapiens (Human) protein is Keratin-associated protein 10-9 (KRTAP10-9).